We begin with the raw amino-acid sequence, 339 residues long: Phenylalanine--tRNA ligase alpha subunit (339 aa).

Residue E253 participates in Mg(2+) binding.

This sequence belongs to the class-II aminoacyl-tRNA synthetase family. Phe-tRNA synthetase alpha subunit type 1 subfamily. Tetramer of two alpha and two beta subunits. It depends on Mg(2+) as a cofactor.

The protein resides in the cytoplasm. It catalyses the reaction tRNA(Phe) + L-phenylalanine + ATP = L-phenylalanyl-tRNA(Phe) + AMP + diphosphate + H(+). The polypeptide is Phenylalanine--tRNA ligase alpha subunit (Ruthia magnifica subsp. Calyptogena magnifica).